The following is a 171-amino-acid chain: Translation initiation factor IF-3 (171 aa).

It belongs to the IF-3 family. In terms of assembly, monomer.

The protein localises to the cytoplasm. IF-3 binds to the 30S ribosomal subunit and shifts the equilibrium between 70S ribosomes and their 50S and 30S subunits in favor of the free subunits, thus enhancing the availability of 30S subunits on which protein synthesis initiation begins. The protein is Translation initiation factor IF-3 of Listeria innocua serovar 6a (strain ATCC BAA-680 / CLIP 11262).